The primary structure comprises 175 residues: Small ribosomal subunit protein uS7 (175 aa).

It belongs to the universal ribosomal protein uS7 family. Part of the 30S ribosomal subunit. Contacts proteins S9 and S11.

Functionally, one of the primary rRNA binding proteins, it binds directly to 16S rRNA where it nucleates assembly of the head domain of the 30S subunit. Is located at the subunit interface close to the decoding center, probably blocks exit of the E-site tRNA. The polypeptide is Small ribosomal subunit protein uS7 (Legionella pneumophila (strain Paris)).